We begin with the raw amino-acid sequence, 269 residues long: Putative pyruvate, phosphate dikinase regulatory protein (269 aa).

151-158 contributes to the ADP binding site; sequence GVSRSSKT.

It belongs to the pyruvate, phosphate/water dikinase regulatory protein family. PDRP subfamily.

It carries out the reaction N(tele)-phospho-L-histidyl/L-threonyl-[pyruvate, phosphate dikinase] + ADP = N(tele)-phospho-L-histidyl/O-phospho-L-threonyl-[pyruvate, phosphate dikinase] + AMP + H(+). It catalyses the reaction N(tele)-phospho-L-histidyl/O-phospho-L-threonyl-[pyruvate, phosphate dikinase] + phosphate + H(+) = N(tele)-phospho-L-histidyl/L-threonyl-[pyruvate, phosphate dikinase] + diphosphate. Bifunctional serine/threonine kinase and phosphorylase involved in the regulation of the pyruvate, phosphate dikinase (PPDK) by catalyzing its phosphorylation/dephosphorylation. This is Putative pyruvate, phosphate dikinase regulatory protein from Geobacter metallireducens (strain ATCC 53774 / DSM 7210 / GS-15).